A 97-amino-acid chain; its full sequence is MANTKSALKRVQISERNRLRNKAYKSAVRTLIKKCLVAVSAYGANPSPEGLESAQQALSEAYSKIDKAVKRNVLHRNNGARKKAGLAKALQKVSQAS.

Positions 76-85 (RNNGARKKAG) are enriched in basic residues. The interval 76–97 (RNNGARKKAGLAKALQKVSQAS) is disordered. Residues 86 to 97 (LAKALQKVSQAS) show a composition bias toward low complexity.

Belongs to the bacterial ribosomal protein bS20 family.

Its function is as follows. Binds directly to 16S ribosomal RNA. The sequence is that of Small ribosomal subunit protein bS20 from Microcystis aeruginosa (strain NIES-843 / IAM M-2473).